We begin with the raw amino-acid sequence, 416 residues long: RNA-editing ligase 2, mitochondrial (416 aa).

Residues 1–17 constitute a mitochondrion transit peptide; sequence MLRRLGVRHFRRTPLLF. Residues 29 to 31, 56 to 62, Arg-79, Glu-126, Phe-173, and 269 to 271 contribute to the ATP site; these read TEI, EKVHGAN, and KFK. The active-site N6-AMP-lysine intermediate is Lys-57.

The protein belongs to the RNA ligase 2 family. As to quaternary structure, component of the RNA editing complex, a 1600 kDa complex composed of at least 20 proteins.

The protein resides in the mitochondrion. It catalyses the reaction ATP + (ribonucleotide)n-3'-hydroxyl + 5'-phospho-(ribonucleotide)m = (ribonucleotide)n+m + AMP + diphosphate.. In terms of biological role, RNA editing in kinetoplastid mitochondria inserts and deletes uridylates at multiple sites in pre-mRNAs as directed by guide RNAs. The protein is RNA-editing ligase 2, mitochondrial (REL2) of Trypanosoma brucei brucei (strain 927/4 GUTat10.1).